We begin with the raw amino-acid sequence, 420 residues long: Serine palmitoyltransferase (420 aa).

Residues 1–21 are compositionally biased toward polar residues; it reads MKHNLQDNLQGEQMANTNSNG. Residues 1–25 form a disordered region; it reads MKHNLQDNLQGEQMANTNSNGGKKP. Pyridoxal 5'-phosphate contacts are provided by residues 132–133, His-233, Thr-261, and Ser-263; that span reads GM. Lys-264 bears the N6-(pyridoxal phosphate)lysine mark.

The protein belongs to the class-II pyridoxal-phosphate-dependent aminotransferase family. Homodimer. Pyridoxal 5'-phosphate serves as cofactor.

It is found in the cytoplasm. It localises to the cell inner membrane. The enzyme catalyses L-serine + hexadecanoyl-CoA + H(+) = 3-oxosphinganine + CO2 + CoA. Its pathway is lipid metabolism; sphingolipid metabolism. Significantly inhibited by palmitoyl-CoA concentrations greater than 100 uM. Functionally, catalyzes the condensation of L-serine with palmitoyl-CoA (hexadecanoyl-CoA) to produce 3-oxosphinganine. This Bacteriovorax stolpii (Bdellovibrio stolpii) protein is Serine palmitoyltransferase.